The primary structure comprises 281 residues: Bis(5'-nucleosyl)-tetraphosphatase, symmetrical (281 aa).

It belongs to the Ap4A hydrolase family.

It catalyses the reaction P(1),P(4)-bis(5'-adenosyl) tetraphosphate + H2O = 2 ADP + 2 H(+). Hydrolyzes diadenosine 5',5'''-P1,P4-tetraphosphate to yield ADP. The polypeptide is Bis(5'-nucleosyl)-tetraphosphatase, symmetrical (Pectobacterium carotovorum subsp. carotovorum (strain PC1)).